A 1402-amino-acid polypeptide reads, in one-letter code: DNA-directed RNA polymerase subunit beta' (1402 aa).

Zn(2+) contacts are provided by Cys71, Cys73, Cys86, and Cys89. The Mg(2+) site is built by Asp462, Asp464, and Asp466. 4 residues coordinate Zn(2+): Cys808, Cys881, Cys888, and Cys891.

This sequence belongs to the RNA polymerase beta' chain family. As to quaternary structure, the RNAP catalytic core consists of 2 alpha, 1 beta, 1 beta' and 1 omega subunit. When a sigma factor is associated with the core the holoenzyme is formed, which can initiate transcription. Mg(2+) is required as a cofactor. Requires Zn(2+) as cofactor.

The catalysed reaction is RNA(n) + a ribonucleoside 5'-triphosphate = RNA(n+1) + diphosphate. DNA-dependent RNA polymerase catalyzes the transcription of DNA into RNA using the four ribonucleoside triphosphates as substrates. The polypeptide is DNA-directed RNA polymerase subunit beta' (Hyphomonas neptunium (strain ATCC 15444)).